The chain runs to 80 residues: Acyl carrier protein (80 aa).

Positions 4 to 79 (DEVKGQVYDI…DAINYIVEKK (76 aa)) constitute a Carrier domain. At Ser39 the chain carries O-(pantetheine 4'-phosphoryl)serine.

Belongs to the acyl carrier protein (ACP) family. 4'-phosphopantetheine is transferred from CoA to a specific serine of apo-ACP by AcpS. This modification is essential for activity because fatty acids are bound in thioester linkage to the sulfhydryl of the prosthetic group.

Its subcellular location is the cytoplasm. Its pathway is lipid metabolism; fatty acid biosynthesis. In terms of biological role, carrier of the growing fatty acid chain in fatty acid biosynthesis. This chain is Acyl carrier protein, found in Chloroherpeton thalassium (strain ATCC 35110 / GB-78).